Consider the following 169-residue polypeptide: Macrocypin-1a (169 aa).

It belongs to the protease inhibitor I85 family.

Its function is as follows. Inhibits papain and cysteine cathepsin endopeptidases, and also inhibits cathepsins B and H, which exhibit both exopeptidase and endopeptidase activities. In Macrolepiota procera (Parasol mushroom), this protein is Macrocypin-1a.